The chain runs to 352 residues: V-type ATP synthase subunit C (352 aa).

The protein belongs to the V-ATPase V0D/AC39 subunit family.

Its function is as follows. Produces ATP from ADP in the presence of a proton gradient across the membrane. The sequence is that of V-type ATP synthase subunit C (atpC) from Deinococcus radiodurans (strain ATCC 13939 / DSM 20539 / JCM 16871 / CCUG 27074 / LMG 4051 / NBRC 15346 / NCIMB 9279 / VKM B-1422 / R1).